The chain runs to 345 residues: Trans-3-hydroxy-L-proline dehydratase (345 aa).

S90 functions as the Proton acceptor in the catalytic mechanism. Substrate contacts are provided by residues 91 to 92, D252, and 257 to 258; these read GS and GT.

It belongs to the proline racemase family.

The catalysed reaction is trans-3-hydroxy-L-proline = 1-pyrroline-2-carboxylate + H2O. In terms of biological role, catalyzes the dehydration of trans-3-hydroxy-L-proline (t3LHyp) to Delta(1)-pyrroline-2-carboxylate (Pyr2C). May be involved in a degradation pathway that converts t3LHyp to L-proline, which would allow S.novella to grow on t3LHyp as a sole carbon source. The chain is Trans-3-hydroxy-L-proline dehydratase from Ancylobacter novellus (strain ATCC 8093 / DSM 506 / JCM 20403 / CCM 1077 / IAM 12100 / NBRC 12443 / NCIMB 10456) (Starkeya novella).